Here is a 760-residue protein sequence, read N- to C-terminus: MNMSLPADRDTAKKPSAQKPSAHAQNATAAVDVTALGLTESEYTQICSLLKRSPTKSELAIYSVLWSEHCSYKSSRRHLRQLADLTEVTKKHLLVGIGQNAGVVDIGGGWAAAFKIESHNHPSFIEPFQGAATGIGGIVRDIIAMGAKPVALMDSLRFGAASDPDTQRVADGVVSGISFYGNCLGVPNIGGETAFDPVYQGNPLVNVLCVGVMRRENIRLANASGPGNLVVLFGAPTGRDGIGGASVLASDSFTSDAKANRPAVQIGDPFVEKLLTECCLELYAADLVVAIQDLGAAGISCAASELAHNGRVGIRLDLSAVPLRDTTLAPDEILVSESQERMMAIVHPDNLEAFFEITNRWGISGAVIGEVDNSQYLTVVHEGKTLVRLNPKTLTGPSYNRPVKKPAYLIRRSAANRLPVTNDPHLLREDILQVISCPNLSDKSVITNQYDRYVQGNTALCHPDDAGVIRMYKNTGVALSCDGNSRYSYLDPHAGAQLAVAEAYRNVSVVGATPLAVTNCLNFGNPENPEVMWQFRETCRGLSDACKRLEIPITGGNVSFYNQTDGKDIFPTPVVGILGIVDNLTQTLTSGWNAPDLFIYLLGVTRPEFGGSVWADTMYGHIGGVPPKLDLARESRLSNLLVAGAKKRVFESAHDLSEGGLIQAIVESCLRHGFGADIALDTIRATSLTEALFSESASRVLVSCRSQEDLRDLCRRNSYEYTLIGTTRHTGELTISEIGKFTLNELSDARQKVTRVLFRG.

The interval 1–25 (MNMSLPADRDTAKKPSAQKPSAHAQ) is disordered. His-69 is an active-site residue. Tyr-72 and Lys-115 together coordinate ATP. A Mg(2+)-binding site is contributed by Glu-117. Substrate-binding positions include 118 to 121 (SHNH) and Arg-140. His-119 serves as the catalytic Proton acceptor. Asp-141 lines the Mg(2+) pocket. Residue Gln-265 participates in substrate binding. A Mg(2+)-binding site is contributed by Asp-293. 337 to 339 (ESQ) is a substrate binding site. The ATP site is built by Asn-519 and Gly-556. Asn-557 contacts Mg(2+). Ser-559 provides a ligand contact to substrate.

This sequence belongs to the FGAMS family. In terms of assembly, monomer. Part of the FGAM synthase complex composed of 1 PurL, 1 PurQ and 2 PurS subunits.

The protein resides in the cytoplasm. It catalyses the reaction N(2)-formyl-N(1)-(5-phospho-beta-D-ribosyl)glycinamide + L-glutamine + ATP + H2O = 2-formamido-N(1)-(5-O-phospho-beta-D-ribosyl)acetamidine + L-glutamate + ADP + phosphate + H(+). It participates in purine metabolism; IMP biosynthesis via de novo pathway; 5-amino-1-(5-phospho-D-ribosyl)imidazole from N(2)-formyl-N(1)-(5-phospho-D-ribosyl)glycinamide: step 1/2. In terms of biological role, part of the phosphoribosylformylglycinamidine synthase complex involved in the purines biosynthetic pathway. Catalyzes the ATP-dependent conversion of formylglycinamide ribonucleotide (FGAR) and glutamine to yield formylglycinamidine ribonucleotide (FGAM) and glutamate. The FGAM synthase complex is composed of three subunits. PurQ produces an ammonia molecule by converting glutamine to glutamate. PurL transfers the ammonia molecule to FGAR to form FGAM in an ATP-dependent manner. PurS interacts with PurQ and PurL and is thought to assist in the transfer of the ammonia molecule from PurQ to PurL. The chain is Phosphoribosylformylglycinamidine synthase subunit PurL from Tropheryma whipplei (strain TW08/27) (Whipple's bacillus).